A 293-amino-acid polypeptide reads, in one-letter code: Acetylglutamate kinase (293 aa).

Substrate is bound by residues 65–66 (GG), Arg87, and Asn188.

Belongs to the acetylglutamate kinase family. ArgB subfamily.

It localises to the cytoplasm. It carries out the reaction N-acetyl-L-glutamate + ATP = N-acetyl-L-glutamyl 5-phosphate + ADP. The protein operates within amino-acid biosynthesis; L-arginine biosynthesis; N(2)-acetyl-L-ornithine from L-glutamate: step 2/4. In terms of biological role, catalyzes the ATP-dependent phosphorylation of N-acetyl-L-glutamate. In Symbiobacterium thermophilum (strain DSM 24528 / JCM 14929 / IAM 14863 / T), this protein is Acetylglutamate kinase.